Here is a 117-residue protein sequence, read N- to C-terminus: Minor capsid protein p17 (117 aa).

Asn-12 carries N-linked (GlcNAc...) asparagine; by host glycosylation. The chain crosses the membrane as a helical span at residues 39–59 (AILLGILILLVIILIIVAIVY). A disordered region spans residues 96–117 (KNSTSQQSHIPSDEQLAELAHS). N-linked (GlcNAc...) asparagine; by host glycosylation is present at Asn-97.

It belongs to the asfivirus minor capsid protein p17 family. As to quaternary structure, interacts with the minor capsid protein M1249L and with the hexon capsid protein p72 capsomers; these interactions form a rigid zipper structure that stabilizes the capsomers. Interacts with host STING1.

It localises to the virion membrane. It is found in the host endoplasmic reticulum membrane. Its function is as follows. Together with the penton and the other minor capsid proteins (M1249L, p49), forms a complicated network immediately below the outer capsid shell, stabilizing the whole capsid. Three copies of p17 encircle each p72 capsomer in the inner capsid shell, anchoring p72 capsomers on the inner membrane. Required for the assembly of the capsid and icosahedral morphogenesis. Additionally, inhibits the host cGAS-STING pathway through its interaction with STING1 and subsequent interference of the recruitment of downstream components TBK1 and IKBKE. In African swine fever virus (isolate Warthog/Namibia/Wart80/1980) (ASFV), this protein is Minor capsid protein p17.